The primary structure comprises 723 residues: Preterminal protein (723 aa).

The Nuclear localization signal signature appears at 453–462 (RLPMRRRRRR). Positions 457–492 (RRRRRRAPPPPPMSEELSEPEVEAFPPASPPRRSFE) are disordered. An O-(5'-phospho-DNA)-serine modification is found at serine 651.

Belongs to the adenoviridae terminal protein family. As to quaternary structure, heterodimer with the polymerase; this heterodimer binds to bp 9 to 18 of the genome. Interacts with host POU2F1; POU2F1 binds to the auxiliary sequences in the inverted terminal repeats and tethers the pTP-POL heterodimer to the origin DNA thereby participating in the assembly of the pre-initiation complex (POL-TP-DBP-NFIA-POU2F1). In terms of processing, preterminal protein is used to replicate viral genome, upon genomic encapsidation it is processed first into iTP and finally into TP by adenovirus protease.

Its subcellular location is the host nucleus matrix. Protein covalently bound to the viral DNA that acts as a primer for viral genomic replication by DNA strand displacement. Assembles on the viral origin of replication in an initiation complex with viral polymerase, DBP, host NFIA and host POU2F1/OCT1. During initiation, the polymerase covalently couples the first dCTP with Ser-580 of pTP. The terminal protein stimulates the template activity over 20 fold compared to protein-free templates. Neo-synthesized viral genomes are linked to two preterminal proteins, one for each 5' end. These new genomes are encapsidated in the nucleus, and during capsid maturation by viral protease, preterminal protein is first cleaved into intermediary (iTP), then into mature TP. May play a role in host nuclear matrix localization of genomic DNA. The protein is Preterminal protein of Canis lupus familiaris (Dog).